Reading from the N-terminus, the 417-residue chain is Tryptophan synthase beta chain (417 aa).

Lys99 is modified (N6-(pyridoxal phosphate)lysine).

It belongs to the TrpB family. Tetramer of two alpha and two beta chains. Requires pyridoxal 5'-phosphate as cofactor.

It carries out the reaction (1S,2R)-1-C-(indol-3-yl)glycerol 3-phosphate + L-serine = D-glyceraldehyde 3-phosphate + L-tryptophan + H2O. Its pathway is amino-acid biosynthesis; L-tryptophan biosynthesis; L-tryptophan from chorismate: step 5/5. The beta subunit is responsible for the synthesis of L-tryptophan from indole and L-serine. This Corynebacterium glutamicum (strain ATCC 13032 / DSM 20300 / JCM 1318 / BCRC 11384 / CCUG 27702 / LMG 3730 / NBRC 12168 / NCIMB 10025 / NRRL B-2784 / 534) protein is Tryptophan synthase beta chain (trpB).